A 333-amino-acid chain; its full sequence is Chemokine XC receptor 1 (333 aa).

Residues 1-31 lie on the Extracellular side of the membrane; sequence MESSGNPESTTFFYYDLQSQPCENQAWVFAT. The helical transmembrane segment at 32-59 threads the bilayer; the sequence is LATTVLYCLVFLLSLVGNSLVLWVLVKY. Residues 60 to 69 lie on the Cytoplasmic side of the membrane; sequence ESLESLTNIF. Residues 70–89 form a helical membrane-spanning segment; that stretch reads ILNLCLSDLVFACLLPVWIS. Residues 90-103 are Extracellular-facing; it reads PYHWGWVLGDFLCK. C102 and C175 are oxidised to a cystine. The helical transmembrane segment at 104–125 threads the bilayer; sequence LLNMIFSISLYSSIFFLTIMTI. Residues 126-142 are Cytoplasmic-facing; the sequence is HRYLSVVSPLSTLRVPT. The helical transmembrane segment at 143–167 threads the bilayer; the sequence is LRCRVLVTMAVWVASILSSILDTIF. The Extracellular segment spans residues 168-190; the sequence is HKVLSSGCDYSELTWYLTSVYQH. The chain crosses the membrane as a helical span at residues 191-209; the sequence is NLFFLLSLGIILFCYVEIL. Residues 210 to 225 are Cytoplasmic-facing; it reads RTLFRSRSKRRHRTVK. The helical transmembrane segment at 226-250 threads the bilayer; that stretch reads LIFAIVVAYFLSWGPYNFTLFLQTL. Residues 251–267 lie on the Extracellular side of the membrane; the sequence is FRTQIIRSCEAKQQLEY. A helical transmembrane segment spans residues 268–291; the sequence is ALLICRNLAFSHCCFNPVLYVFVG. At 292–333 the chain is on the cytoplasmic side; sequence VKFRTHLKHVLRQFWFCRLQAPSPASIPHSPGAFAYEGASFY.

It belongs to the G-protein coupled receptor 1 family.

Its subcellular location is the cell membrane. Its function is as follows. Receptor for chemokines SCYC1 and SCYC2. Subsequently transduces a signal by increasing the intracellular calcium ions level. Receptor for XCL1/Lymphotactin. In Homo sapiens (Human), this protein is Chemokine XC receptor 1 (XCR1).